The primary structure comprises 323 residues: Aspartate carbamoyltransferase catalytic subunit (323 aa).

Carbamoyl phosphate is bound by residues Arg-55 and Thr-56. Lys-83 provides a ligand contact to L-aspartate. Carbamoyl phosphate-binding residues include Arg-105, His-138, and Gln-141. Residues Arg-181 and Arg-235 each coordinate L-aspartate. Carbamoyl phosphate contacts are provided by Gly-276 and Pro-277.

This sequence belongs to the aspartate/ornithine carbamoyltransferase superfamily. ATCase family. As to quaternary structure, heterododecamer (2C3:3R2) of six catalytic PyrB chains organized as two trimers (C3), and six regulatory PyrI chains organized as three dimers (R2).

The catalysed reaction is carbamoyl phosphate + L-aspartate = N-carbamoyl-L-aspartate + phosphate + H(+). The protein operates within pyrimidine metabolism; UMP biosynthesis via de novo pathway; (S)-dihydroorotate from bicarbonate: step 2/3. Functionally, catalyzes the condensation of carbamoyl phosphate and aspartate to form carbamoyl aspartate and inorganic phosphate, the committed step in the de novo pyrimidine nucleotide biosynthesis pathway. This is Aspartate carbamoyltransferase catalytic subunit from Corynebacterium aurimucosum (strain ATCC 700975 / DSM 44827 / CIP 107346 / CN-1) (Corynebacterium nigricans).